The following is a 208-amino-acid chain: Imidazoleglycerol-phosphate dehydratase (208 aa).

The segment at 1 to 20 is disordered; sequence MSRRATVKAPRAGAAARRGA. The segment covering 7 to 19 has biased composition (low complexity); that stretch reads VKAPRAGAAARRG.

It belongs to the imidazoleglycerol-phosphate dehydratase family.

Its subcellular location is the cytoplasm. It catalyses the reaction D-erythro-1-(imidazol-4-yl)glycerol 3-phosphate = 3-(imidazol-4-yl)-2-oxopropyl phosphate + H2O. Its pathway is amino-acid biosynthesis; L-histidine biosynthesis; L-histidine from 5-phospho-alpha-D-ribose 1-diphosphate: step 6/9. The sequence is that of Imidazoleglycerol-phosphate dehydratase from Anaeromyxobacter sp. (strain K).